The primary structure comprises 196 residues: Anthranilate synthase component 2 (196 aa).

A Glutamine amidotransferase type-1 domain is found at 3 to 196; that stretch reads NIVFIDNFDS…IEWALEKNNA (194 aa). 57 to 59 provides a ligand contact to L-glutamine; it reads GPG. C84 (nucleophile; for GATase activity) is an active-site residue. Residues Q88 and 134–135 each bind L-glutamine; that span reads SL. Catalysis depends on for GATase activity residues H170 and E172.

Heterotetramer consisting of two non-identical subunits: a beta subunit (TrpG) and a large alpha subunit (TrpE).

It catalyses the reaction chorismate + L-glutamine = anthranilate + pyruvate + L-glutamate + H(+). Its pathway is amino-acid biosynthesis; L-tryptophan biosynthesis; L-tryptophan from chorismate: step 1/5. In terms of biological role, part of a heterotetrameric complex that catalyzes the two-step biosynthesis of anthranilate, an intermediate in the biosynthesis of L-tryptophan. In the first step, the glutamine-binding beta subunit (TrpG) of anthranilate synthase (AS) provides the glutamine amidotransferase activity which generates ammonia as a substrate that, along with chorismate, is used in the second step, catalyzed by the large alpha subunit of AS (TrpE) to produce anthranilate. In the absence of TrpG, TrpE can synthesize anthranilate directly from chorismate and high concentrations of ammonia. This Vibrio parahaemolyticus serotype O3:K6 (strain RIMD 2210633) protein is Anthranilate synthase component 2 (trpG).